The chain runs to 162 residues: uncharacterized protein (162 aa).

Residues 129 to 161 (DLNAVLKNLKEVEKKSLKISKEELKKKLDQILG) are a coiled coil.

This is an uncharacterized protein from Aquifex aeolicus (strain VF5).